Reading from the N-terminus, the 103-residue chain is Co-chaperonin GroES (103 aa).

It belongs to the GroES chaperonin family. In terms of assembly, heptamer of 7 subunits arranged in a ring. Interacts with the chaperonin GroEL.

Its subcellular location is the cytoplasm. Functionally, together with the chaperonin GroEL, plays an essential role in assisting protein folding. The GroEL-GroES system forms a nano-cage that allows encapsulation of the non-native substrate proteins and provides a physical environment optimized to promote and accelerate protein folding. GroES binds to the apical surface of the GroEL ring, thereby capping the opening of the GroEL channel. The chain is Co-chaperonin GroES from Prochlorococcus marinus (strain MIT 9515).